The primary structure comprises 228 residues: uncharacterized protein (228 aa).

The next 4 membrane-spanning stretches (helical) occupy residues 37-54 (WCMH…TLIV), 67-89 (VVSI…STGV), 104-126 (HIGI…TSRL), and 138-160 (VLHV…LVLY).

It localises to the cell membrane. This is an uncharacterized protein from Treponema pallidum (strain Nichols).